We begin with the raw amino-acid sequence, 56 residues long: Ribosome modulation factor (56 aa).

It belongs to the ribosome modulation factor family.

The protein localises to the cytoplasm. Functionally, during stationary phase, converts 70S ribosomes to an inactive dimeric form (100S ribosomes). The protein is Ribosome modulation factor of Proteus mirabilis (strain HI4320).